The following is a 289-amino-acid chain: tRNA pseudouridine synthase B (289 aa).

Catalysis depends on Asp55, which acts as the Nucleophile. The tract at residues 243–289 (PGGVLAQHEREGSRALDSAAGNAEHDREEARIADNNREDRSRQHADR) is disordered. Positions 265–289 (AEHDREEARIADNNREDRSRQHADR) are enriched in basic and acidic residues.

It belongs to the pseudouridine synthase TruB family. Type 1 subfamily.

The enzyme catalyses uridine(55) in tRNA = pseudouridine(55) in tRNA. Responsible for synthesis of pseudouridine from uracil-55 in the psi GC loop of transfer RNAs. This is tRNA pseudouridine synthase B from Chlorobium luteolum (strain DSM 273 / BCRC 81028 / 2530) (Pelodictyon luteolum).